We begin with the raw amino-acid sequence, 515 residues long: Protein FAM98A (515 aa).

2 disordered regions span residues V297 to G411 and S432 to S515. Basic and acidic residues predominate over residues V302–E311. Gly residues predominate over residues W382–D395. The segment covering R444 to S456 has biased composition (basic and acidic residues). The span at G457 to G481 shows a compositional bias: gly residues. Residues Y485 to Q501 show a composition bias toward low complexity. The segment covering Y502 to S515 has biased composition (polar residues).

The protein belongs to the FAM98 family. As to quaternary structure, interacts (via N- and C-terminus) with DDX1. Interacts (via N- and C-terminus) with C14orf166. Interacts with FAM98B. Interacts with PLEKHM1 (via N- and C-terminus).

Its function is as follows. Positively stimulates PRMT1-induced protein arginine methylation. Involved in skeletal homeostasis. Positively regulates lysosome peripheral distribution and ruffled border formation in osteoclasts. This is Protein FAM98A from Rattus norvegicus (Rat).